A 372-amino-acid chain; its full sequence is Aminomethyltransferase (372 aa).

Belongs to the GcvT family. As to quaternary structure, the glycine cleavage system is composed of four proteins: P, T, L and H.

It catalyses the reaction N(6)-[(R)-S(8)-aminomethyldihydrolipoyl]-L-lysyl-[protein] + (6S)-5,6,7,8-tetrahydrofolate = N(6)-[(R)-dihydrolipoyl]-L-lysyl-[protein] + (6R)-5,10-methylene-5,6,7,8-tetrahydrofolate + NH4(+). In terms of biological role, the glycine cleavage system catalyzes the degradation of glycine. The polypeptide is Aminomethyltransferase (Burkholderia ambifaria (strain MC40-6)).